Here is a 1006-residue protein sequence, read N- to C-terminus: DNA polymerase (1006 aa).

Belongs to the DNA polymerase type-B family. In terms of assembly, interacts with OPG148/A20. Component of the Uracil-DNA glycosylase(UDG)-OPG148/A20-polymerase complex; OPG148/A20 and OPG116/UDG form a heterodimeric processivity factor that associates with OPG071/E9 to form the processive polymerase holoenzyme.

The enzyme catalyses DNA(n) + a 2'-deoxyribonucleoside 5'-triphosphate = DNA(n+1) + diphosphate. Catalyzes DNA synthesis. Acquires processivity by associating with a heterodimeric processivity factor comprised of the viral OPG148/A20 and OPG116/D4 proteins, thereby forming the DNA polymerase holoenzyme. Displays 3'- to 5' exonuclease activity. Might participate in viral DNA recombination. Does not perform OPG116/D4synthesis across an abasic site. In Bos taurus (Bovine), this protein is DNA polymerase (OPG071).